The sequence spans 396 residues: NADH-quinone oxidoreductase subunit D (396 aa).

Belongs to the complex I 49 kDa subunit family. As to quaternary structure, NDH-1 is composed of 14 different subunits. Subunits NuoB, C, D, E, F, and G constitute the peripheral sector of the complex.

The protein localises to the cell inner membrane. The catalysed reaction is a quinone + NADH + 5 H(+)(in) = a quinol + NAD(+) + 4 H(+)(out). NDH-1 shuttles electrons from NADH, via FMN and iron-sulfur (Fe-S) centers, to quinones in the respiratory chain. The immediate electron acceptor for the enzyme in this species is believed to be ubiquinone. Couples the redox reaction to proton translocation (for every two electrons transferred, four hydrogen ions are translocated across the cytoplasmic membrane), and thus conserves the redox energy in a proton gradient. This chain is NADH-quinone oxidoreductase subunit D, found in Rhodopseudomonas palustris (strain BisA53).